A 137-amino-acid chain; its full sequence is Nucleoside diphosphate kinase (137 aa).

ATP is bound by residues Lys-9, Phe-57, Arg-85, Thr-91, Arg-102, and Asn-112. His-115 serves as the catalytic Pros-phosphohistidine intermediate.

Belongs to the NDK family. In terms of assembly, homotetramer. Requires Mg(2+) as cofactor.

Its subcellular location is the cytoplasm. It catalyses the reaction a 2'-deoxyribonucleoside 5'-diphosphate + ATP = a 2'-deoxyribonucleoside 5'-triphosphate + ADP. It carries out the reaction a ribonucleoside 5'-diphosphate + ATP = a ribonucleoside 5'-triphosphate + ADP. In terms of biological role, major role in the synthesis of nucleoside triphosphates other than ATP. The ATP gamma phosphate is transferred to the NDP beta phosphate via a ping-pong mechanism, using a phosphorylated active-site intermediate. In Campylobacter jejuni subsp. jejuni serotype O:23/36 (strain 81-176), this protein is Nucleoside diphosphate kinase.